Here is an 892-residue protein sequence, read N- to C-terminus: Alpha-actinin-1 (892 aa).

M1 bears the N-acetylmethionine mark. Residues 1–247 form an actin-binding region; the sequence is MDHYDSQQTN…IMTYVSSFYH (247 aa). At S6 the chain carries Phosphoserine. A Phosphotyrosine; by FAK1 modification is found at Y12. 2 consecutive Calponin-homology (CH) domains span residues 31–135 and 144–250; these read KQQR…LRFA and TSAK…HAFS. N6-acetyllysine occurs at positions 95 and 195. Spectrin repeat units follow at residues 274 to 384, 394 to 499, 509 to 620, and 630 to 733; these read QLME…WLLN, HLAE…ALER, QLYL…ALTE, and RLRK…EVEN. The tract at residues 274–733 is interaction with DDN; the sequence is QLMEDYEKLA…IARTINEVEN (460 aa). S471 carries the phosphoserine modification. K676 carries the N6-acetyllysine modification. S677 bears the Phosphoserine mark. 2 consecutive EF-hand domains span residues 746–781 and 787–822; these read EQMN…LGYD and QGEA…ETAD. Ca(2+) contacts are provided by D759, D761, S763, T765, and E770. Residue S890 is modified to Phosphoserine.

It belongs to the alpha-actinin family. Homodimer; antiparallel. Interacts with MYOZ2, TTID and LPP. Interacts with DDN. Interacts with PSD. Interacts with MICALL2. Interacts with DNM2 and CTTN. Interacts with PDLIM1. Interacts with PDLIM2. Interacts with PDLIM4 (via PDZ domain). Interacts with IGSF8.

It is found in the cytoplasm. It localises to the cytoskeleton. Its subcellular location is the myofibril. The protein localises to the sarcomere. The protein resides in the z line. It is found in the cell membrane. It localises to the cell junction. Its subcellular location is the cell projection. The protein localises to the ruffle. Functionally, F-actin cross-linking protein which is thought to anchor actin to a variety of intracellular structures. Association with IGSF8 regulates the immune synapse formation and is required for efficient T-cell activation. The sequence is that of Alpha-actinin-1 (ACTN1) from Macaca fascicularis (Crab-eating macaque).